The chain runs to 208 residues: Large ribosomal subunit protein uL3 (208 aa).

Positions 116-148 are disordered; that stretch reads GFQGVIKRHGQSRGPMAHGSRYHRRPGSMGPVA.

Belongs to the universal ribosomal protein uL3 family. In terms of assembly, part of the 50S ribosomal subunit. Forms a cluster with proteins L14 and L19.

In terms of biological role, one of the primary rRNA binding proteins, it binds directly near the 3'-end of the 23S rRNA, where it nucleates assembly of the 50S subunit. This is Large ribosomal subunit protein uL3 from Streptococcus agalactiae serotype Ia (strain ATCC 27591 / A909 / CDC SS700).